Reading from the N-terminus, the 188-residue chain is NADH-quinone oxidoreductase subunit B 1 (188 aa).

[4Fe-4S] cluster is bound by residues Cys-39, Cys-40, Cys-105, and Cys-134.

This sequence belongs to the complex I 20 kDa subunit family. NDH-1 is composed of 14 different subunits. Subunits NuoB, C, D, E, F, and G constitute the peripheral sector of the complex. Requires [4Fe-4S] cluster as cofactor.

It localises to the cell inner membrane. The enzyme catalyses a quinone + NADH + 5 H(+)(in) = a quinol + NAD(+) + 4 H(+)(out). Functionally, NDH-1 shuttles electrons from NADH, via FMN and iron-sulfur (Fe-S) centers, to quinones in the respiratory chain. The immediate electron acceptor for the enzyme in this species is believed to be ubiquinone. Couples the redox reaction to proton translocation (for every two electrons transferred, four hydrogen ions are translocated across the cytoplasmic membrane), and thus conserves the redox energy in a proton gradient. In Solibacter usitatus (strain Ellin6076), this protein is NADH-quinone oxidoreductase subunit B 1.